Reading from the N-terminus, the 91-residue chain is ATP synthase subunit c (91 aa).

The next 2 helical transmembrane spans lie at 4–24 and 53–73; these read FTMCMLAAGFGMAIGAFGTGI and IGLAMIESLAIYVLVVCLIIL.

Belongs to the ATPase C chain family. As to quaternary structure, F-type ATPases have 2 components, F(1) - the catalytic core - and F(0) - the membrane proton channel. F(1) has five subunits: alpha(3), beta(3), gamma(1), delta(1), epsilon(1). F(0) has three main subunits: a(1), b(2) and c(10-14). The alpha and beta chains form an alternating ring which encloses part of the gamma chain. F(1) is attached to F(0) by a central stalk formed by the gamma and epsilon chains, while a peripheral stalk is formed by the delta and b chains.

Its subcellular location is the cell inner membrane. F(1)F(0) ATP synthase produces ATP from ADP in the presence of a proton or sodium gradient. F-type ATPases consist of two structural domains, F(1) containing the extramembraneous catalytic core and F(0) containing the membrane proton channel, linked together by a central stalk and a peripheral stalk. During catalysis, ATP synthesis in the catalytic domain of F(1) is coupled via a rotary mechanism of the central stalk subunits to proton translocation. In terms of biological role, key component of the F(0) channel; it plays a direct role in translocation across the membrane. A homomeric c-ring of between 10-14 subunits forms the central stalk rotor element with the F(1) delta and epsilon subunits. In Geobacter sulfurreducens (strain ATCC 51573 / DSM 12127 / PCA), this protein is ATP synthase subunit c.